Reading from the N-terminus, the 786-residue chain is Endonuclease MutS2 (786 aa).

Residue 335 to 342 (GPNTGGKT) coordinates ATP. The Smr domain maps to 711–786 (LDLRGERFEN…GLGVTVVELK (76 aa)).

This sequence belongs to the DNA mismatch repair MutS family. MutS2 subfamily. As to quaternary structure, homodimer. Binds to stalled ribosomes, contacting rRNA.

Functionally, endonuclease that is involved in the suppression of homologous recombination and thus may have a key role in the control of bacterial genetic diversity. Its function is as follows. Acts as a ribosome collision sensor, splitting the ribosome into its 2 subunits. Detects stalled/collided 70S ribosomes which it binds and splits by an ATP-hydrolysis driven conformational change. Acts upstream of the ribosome quality control system (RQC), a ribosome-associated complex that mediates the extraction of incompletely synthesized nascent chains from stalled ribosomes and their subsequent degradation. Probably generates substrates for RQC. This is Endonuclease MutS2 from Bacillus cereus (strain B4264).